The primary structure comprises 101 residues: MAKVAVINRDLKRRKIVKKFEARRAELLATINDASVSDEDRHSARIKLQMLPRNASPVRLRNRCSLTGRPRGVYSKFGLGRGKLRDIAMSGEIPGMIKASW.

This sequence belongs to the universal ribosomal protein uS14 family. In terms of assembly, part of the 30S ribosomal subunit. Contacts proteins S3 and S10.

In terms of biological role, binds 16S rRNA, required for the assembly of 30S particles and may also be responsible for determining the conformation of the 16S rRNA at the A site. In Nitrosospira multiformis (strain ATCC 25196 / NCIMB 11849 / C 71), this protein is Small ribosomal subunit protein uS14.